Here is a 189-residue protein sequence, read N- to C-terminus: dCTP deaminase (189 aa).

DCTP is bound by residues 112-117, 136-138, Gln157, Tyr171, and Gln181; these read KSTYAR and TLE. Glu138 serves as the catalytic Proton donor/acceptor.

This sequence belongs to the dCTP deaminase family. Homotrimer.

The catalysed reaction is dCTP + H2O + H(+) = dUTP + NH4(+). It participates in pyrimidine metabolism; dUMP biosynthesis; dUMP from dCTP (dUTP route): step 1/2. Functionally, catalyzes the deamination of dCTP to dUTP. This is dCTP deaminase from Paraburkholderia phymatum (strain DSM 17167 / CIP 108236 / LMG 21445 / STM815) (Burkholderia phymatum).